The following is a 493-amino-acid chain: MKISLSPATPEAWSGSVLALGIPENDPQGLVAAMEQRFSLQLSDWLKQKPFSGKPGDCVSLPLLRSDCTALVLVGLGEASSVDRDRLRLAAAAAARAAQGQGGTLGLLLPWSSDTPEEDAAAAAEAVRLALYSDERFRSKPEPSPKPDQLELLGSLPGGLSHGLEAVHPVCAGVELARELVAAPPNSVTPAELARTASHLAHEHGLELTILERSDCEERGMGSFLSVCQGSDMDPKFIHLTYRPNDAASKRLVLVGKGLTFDSGGYNLKVGAAQIDMMKFDMGGSAAVFGAMRAIAELRPAGVEVHMLVASCENMINGSAVHPGDIVTASNGTTIEINNTDAEGRLTLADALVYACKLKPDAIVDLATLTGACVIALGDEIAGLWSGDDSLSSQLEMAAQAAGEGLWRMPLHSPYRKGLKSLLADMKNTGPRPGGSITAALFLKEFVDAGIPWAHIDIAGTVWSDKGRGLDPSGATGYGVRTLVNWITNQANT.

Mn(2+)-binding residues include Lys-257 and Asp-262. Residue Lys-269 is part of the active site. Mn(2+) contacts are provided by Asp-281, Asp-341, and Glu-343. Residue Arg-345 is part of the active site.

The protein belongs to the peptidase M17 family. It depends on Mn(2+) as a cofactor.

The protein resides in the cytoplasm. It catalyses the reaction Release of an N-terminal amino acid, Xaa-|-Yaa-, in which Xaa is preferably Leu, but may be other amino acids including Pro although not Arg or Lys, and Yaa may be Pro. Amino acid amides and methyl esters are also readily hydrolyzed, but rates on arylamides are exceedingly low.. It carries out the reaction Release of an N-terminal amino acid, preferentially leucine, but not glutamic or aspartic acids.. In terms of biological role, presumably involved in the processing and regular turnover of intracellular proteins. Catalyzes the removal of unsubstituted N-terminal amino acids from various peptides. This chain is Probable cytosol aminopeptidase, found in Synechococcus sp. (strain WH7803).